The chain runs to 182 residues: Large ribosomal subunit protein uL16 (182 aa).

Belongs to the universal ribosomal protein uL16 family.

This is Large ribosomal subunit protein uL16 from Pyrobaculum islandicum (strain DSM 4184 / JCM 9189 / GEO3).